The chain runs to 767 residues: Integrin beta-8 (767 aa).

The first 21 residues, 1–21 (MCGSALAFLTAALLSLHNCQR), serve as a signal peptide directing secretion. At 22–681 (GPALVLGAAW…SECLSGPSYL (660 aa)) the chain is on the extracellular side. Positions 46-95 (RCGSANVVSCARCLQLGPECGWCVQEDFVSGGSGSERCDTVSSLISKGCP) constitute a PSI domain. Cystine bridges form between cysteine 47/cysteine 65, cysteine 55/cysteine 469, cysteine 58/cysteine 83, cysteine 68/cysteine 94, cysteine 211/cysteine 218, cysteine 266/cysteine 307, cysteine 407/cysteine 419, cysteine 439/cysteine 467, cysteine 471/cysteine 490, cysteine 471/cysteine 493, cysteine 481/cysteine 493, cysteine 498/cysteine 527, cysteine 510/cysteine 525, cysteine 519/cysteine 530, cysteine 532/cysteine 545, cysteine 552/cysteine 566, cysteine 560/cysteine 571, cysteine 573/cysteine 582, cysteine 584/cysteine 608, cysteine 592/cysteine 606, cysteine 600/cysteine 611, cysteine 613/cysteine 623, cysteine 626/cysteine 629, cysteine 633/cysteine 660, and cysteine 639/cysteine 656. The region spanning 146 to 384 (PVDLYYLVDV…NLVVEAYKKI (239 aa)) is the VWFA domain. Residues aspartate 154 and serine 156 each contribute to the Mg(2+) site. Residue aspartate 193 coordinates Ca(2+). Residue asparagine 233 is glycosylated (N-linked (GlcNAc...) asparagine). Ca(2+) is bound by residues asparagine 249, aspartate 251, proline 253, and glutamate 254. Residue glutamate 254 participates in Mg(2+) binding. Asparagine 402 is a glycosylation site (N-linked (GlcNAc...) asparagine). N-linked (GlcNAc...) asparagine glycosylation is found at asparagine 421, asparagine 431, and asparagine 456. 4 consecutive I-EGF domains span residues 471-494 (CENH…PQCD), 498-546 (CHFD…QYCE), 547-583 (KDDF…DRCQ), and 584-624 (CPSA…RLCE). Asparagine 647 carries an N-linked (GlcNAc...) asparagine glycan. Residues 682-702 (RIFFIIFIVTFLIGLLKVLII) traverse the membrane as a helical segment. The Cytoplasmic segment spans residues 703-767 (RQVILQWNNN…NAQEAFRCNF (65 aa)).

Belongs to the integrin beta chain family. Heterodimer of an alpha and a beta subunit. Beta-8 (ITGB8) associates with alpha-V (ITGAV) to form ITGAV:ITGB8. ITGAV:ITGB8 interacts with TGFB1.

It is found in the cell membrane. In terms of biological role, integrin alpha-V:beta-8 (ITGAV:ITGB8) is a receptor for fibronectin. It recognizes the sequence R-G-D in its ligands. Integrin alpha-V:beta-6 (ITGAV:ITGB6) mediates R-G-D-dependent release of transforming growth factor beta-1 (TGF-beta-1) from regulatory Latency-associated peptide (LAP), thereby playing a key role in TGF-beta-1 activation on the surface of activated regulatory T-cells (Tregs). Required during vasculogenesis. In Mus musculus (Mouse), this protein is Integrin beta-8.